The chain runs to 265 residues: MPPELLRDVLMRIERSEDTWPSRKNVVSCVGVCKNWRQIFKEIVNVPEVSSKFTFPISLKQPGPGGSLVQCYVKRNRSNQTFYLYLGGEAKIFCQSEPSEPNKSIWKLSLKPGGTATTQTELDNFVSFRSPSGQKEGVLVLKSKVPRLEEQSWCLDFNGWRDIVSSGKKFQLVALLRTNLRMKTTFSSLRKSETCTNSSYEAEWIPLVRTSVFAVIARVCRDKKHTPSYELKLALYFAKNSAILKKFVLRGYTREEDLLALPVAN.

Residues 1 to 44 (MPPELLRDVLMRIERSEDTWPSRKNVVSCVGVCKNWRQIFKEIV) enclose the F-box domain. An FBD domain is found at 228 to 250 (SYELKLALYFAKNSAILKKFVLR).

The protein belongs to the TUB family.

The protein is Putative Tubby-like protein 4 of Arabidopsis thaliana (Mouse-ear cress).